A 148-amino-acid chain; its full sequence is Large ribosomal subunit protein bL9 (148 aa).

This sequence belongs to the bacterial ribosomal protein bL9 family.

Functionally, binds to the 23S rRNA. The polypeptide is Large ribosomal subunit protein bL9 (Methylococcus capsulatus (strain ATCC 33009 / NCIMB 11132 / Bath)).